Consider the following 355-residue polypeptide: Probable dual-specificity RNA methyltransferase RlmN (355 aa).

The Proton acceptor role is filled by Glu107. The 229-residue stretch at 113–341 (TDKRLTVCVS…VSVRYSRGLE (229 aa)) folds into the Radical SAM core domain. Cys120 and Cys346 are joined by a disulfide. 3 residues coordinate [4Fe-4S] cluster: Cys127, Cys131, and Cys134. S-adenosyl-L-methionine is bound by residues 174 to 175 (GE), Ser204, 227 to 229 (SLH), and Asn303. Cys346 serves as the catalytic S-methylcysteine intermediate.

The protein belongs to the radical SAM superfamily. RlmN family. It depends on [4Fe-4S] cluster as a cofactor.

It localises to the cytoplasm. The enzyme catalyses adenosine(2503) in 23S rRNA + 2 reduced [2Fe-2S]-[ferredoxin] + 2 S-adenosyl-L-methionine = 2-methyladenosine(2503) in 23S rRNA + 5'-deoxyadenosine + L-methionine + 2 oxidized [2Fe-2S]-[ferredoxin] + S-adenosyl-L-homocysteine. The catalysed reaction is adenosine(37) in tRNA + 2 reduced [2Fe-2S]-[ferredoxin] + 2 S-adenosyl-L-methionine = 2-methyladenosine(37) in tRNA + 5'-deoxyadenosine + L-methionine + 2 oxidized [2Fe-2S]-[ferredoxin] + S-adenosyl-L-homocysteine. Its function is as follows. Specifically methylates position 2 of adenine 2503 in 23S rRNA and position 2 of adenine 37 in tRNAs. The polypeptide is Probable dual-specificity RNA methyltransferase RlmN (Trichormus variabilis (strain ATCC 29413 / PCC 7937) (Anabaena variabilis)).